A 178-amino-acid chain; its full sequence is Large ribosomal subunit protein uL6 (178 aa).

It belongs to the universal ribosomal protein uL6 family. In terms of assembly, part of the 50S ribosomal subunit.

This protein binds to the 23S rRNA, and is important in its secondary structure. It is located near the subunit interface in the base of the L7/L12 stalk, and near the tRNA binding site of the peptidyltransferase center. This Buchnera aphidicola subsp. Acyrthosiphon pisum (strain APS) (Acyrthosiphon pisum symbiotic bacterium) protein is Large ribosomal subunit protein uL6.